A 222-amino-acid polypeptide reads, in one-letter code: Ubiquitin-conjugating enzyme E2 S (222 aa).

N-acetylmethionine is present on M1. One can recognise a UBC core domain in the interval 11–157 (HIIRLVYKEV…ARLLTEIHGG (147 aa)). The Glycyl thioester intermediate role is filled by C95. The interval 156-222 (GGAGGPSGRA…TDKKRALRRL (67 aa)) is disordered. At S173 the chain carries Phosphoserine. The segment covering 208–222 (AAKKKTDKKRALRRL) has biased composition (basic residues).

Belongs to the ubiquitin-conjugating enzyme family. Component of the APC/C complex, composed of at least 14 distinct subunits that assemble into a complex of at least 19 chains with a combined molecular mass of around 1.2 MDa. Within this complex, directly interacts with ANAPC2 and ANAPC4. Interacts with CDC20, FZR1/CDH1 and VHL. In terms of processing, autoubiquitinated by the APC/C complex during G1, leading to its degradation by the proteasome.

It catalyses the reaction S-ubiquitinyl-[E1 ubiquitin-activating enzyme]-L-cysteine + [E2 ubiquitin-conjugating enzyme]-L-cysteine = [E1 ubiquitin-activating enzyme]-L-cysteine + S-ubiquitinyl-[E2 ubiquitin-conjugating enzyme]-L-cysteine.. It functions in the pathway protein modification; protein ubiquitination. Functionally, accepts ubiquitin from the E1 complex and catalyzes its covalent attachment to other proteins. Catalyzes 'Lys-11'-linked polyubiquitination. Acts as an essential factor of the anaphase promoting complex/cyclosome (APC/C), a cell cycle-regulated ubiquitin ligase that controls progression through mitosis. Acts by specifically elongating 'Lys-11'-linked polyubiquitin chains initiated by the E2 enzyme UBE2C/UBCH10 on APC/C substrates, enhancing the degradation of APC/C substrates by the proteasome and promoting mitotic exit. Also acts by elongating ubiquitin chains initiated by the E2 enzyme UBE2D1/UBCH5 in vitro; it is however unclear whether UBE2D1/UBCH5 acts as an E2 enzyme for the APC/C in vivo. Also involved in ubiquitination and subsequent degradation of VHL, resulting in an accumulation of HIF1A. In vitro able to promote polyubiquitination using all 7 ubiquitin Lys residues, except 'Lys-48'-linked polyubiquitination. The protein is Ubiquitin-conjugating enzyme E2 S (UBE2S) of Homo sapiens (Human).